Reading from the N-terminus, the 262-residue chain is Putative protein-methionine-sulfoxide reductase subunit YedZ1 (262 aa).

It belongs to the MsrP family.

Part of the YedY1-YedZ1 system that may repair oxidized proteins containing methionine sulfoxide residues (Met-O). In Azospira oryzae (strain ATCC BAA-33 / DSM 13638 / PS) (Dechlorosoma suillum), this protein is Putative protein-methionine-sulfoxide reductase subunit YedZ1.